Here is a 430-residue protein sequence, read N- to C-terminus: Dihydroorotase (430 aa).

Zn(2+)-binding residues include H57 and H59. Residues 59–61 and N91 contribute to the substrate site; that span reads HLR. Residues D151, H178, and H231 each coordinate Zn(2+). N277 provides a ligand contact to substrate. Residue D304 coordinates Zn(2+). D304 is an active-site residue. Substrate is bound by residues H308 and 322 to 323; that span reads PG.

It belongs to the metallo-dependent hydrolases superfamily. DHOase family. Class I DHOase subfamily. Requires Zn(2+) as cofactor.

The catalysed reaction is (S)-dihydroorotate + H2O = N-carbamoyl-L-aspartate + H(+). Its pathway is pyrimidine metabolism; UMP biosynthesis via de novo pathway; (S)-dihydroorotate from bicarbonate: step 3/3. Catalyzes the reversible cyclization of carbamoyl aspartate to dihydroorotate. In Mycobacterium bovis (strain ATCC BAA-935 / AF2122/97), this protein is Dihydroorotase.